The sequence spans 300 residues: Porphobilinogen deaminase (300 aa).

The residue at position 243 (cysteine 243) is an S-(dipyrrolylmethanemethyl)cysteine.

Belongs to the HMBS family. As to quaternary structure, monomer. Dipyrromethane serves as cofactor.

It catalyses the reaction 4 porphobilinogen + H2O = hydroxymethylbilane + 4 NH4(+). It functions in the pathway porphyrin-containing compound metabolism; protoporphyrin-IX biosynthesis; coproporphyrinogen-III from 5-aminolevulinate: step 2/4. Functionally, tetrapolymerization of the monopyrrole PBG into the hydroxymethylbilane pre-uroporphyrinogen in several discrete steps. This chain is Porphobilinogen deaminase, found in Clostridium novyi (strain NT).